A 324-amino-acid chain; its full sequence is Glutathione synthetase (324 aa).

Residues 129–313 (KLYALHFPDL…LEDEIVDWLV (185 aa)) form the ATP-grasp domain. 155 to 211 (VDIHGRAVIKPLDGKGGEGIFLLARADRNLNAIIEASTAYGTRHVMVQRYLEESRQG) is a binding site for ATP. Mg(2+) contacts are provided by glutamate 284 and asparagine 286.

Belongs to the prokaryotic GSH synthase family. It depends on Mg(2+) as a cofactor. Requires Mn(2+) as cofactor.

It catalyses the reaction gamma-L-glutamyl-L-cysteine + glycine + ATP = glutathione + ADP + phosphate + H(+). It participates in sulfur metabolism; glutathione biosynthesis; glutathione from L-cysteine and L-glutamate: step 2/2. In Gloeobacter violaceus (strain ATCC 29082 / PCC 7421), this protein is Glutathione synthetase.